Reading from the N-terminus, the 78-residue chain is Acyl carrier protein (78 aa).

The Carrier domain maps to 2–77 (STIEERVKKI…AAIDYINGHQ (76 aa)). An O-(pantetheine 4'-phosphoryl)serine modification is found at Ser37.

This sequence belongs to the acyl carrier protein (ACP) family. In terms of processing, 4'-phosphopantetheine is transferred from CoA to a specific serine of apo-ACP by AcpS. This modification is essential for activity because fatty acids are bound in thioester linkage to the sulfhydryl of the prosthetic group.

The protein resides in the cytoplasm. Its pathway is lipid metabolism; fatty acid biosynthesis. Carrier of the growing fatty acid chain in fatty acid biosynthesis. This is Acyl carrier protein from Shigella flexneri.